The chain runs to 508 residues: MVGTHMDESVDIVLVGAGVMSATLATLLHELEPDARIEIIERLDSTASESSFAWNNAGTGHAGLCELNYTPRADDGSISLDKAIHTNTLFEESKQFWSYLVEKGNLGDPGRFVHPVPHMSFVRGEDDVRFLRDRYHAMREHPCFEGMEYTEDRSVIGQWAPLLLDGREGDEPLAATRVATGTDVDFGALTRQLLARLEEKPDEQVRITTGQTVEDLTRNEDGSWRIKIAGNDDTQRTLNARFVFLGAGGASLHLLQKSGIPEGKGYAGFPVSGQWLRCDKPEIVSRHNAKVYSKAPIGAPPMSVPHLDTRNVDGSPSLLFGPFAGFTTKFLKTGSVMDLAKSVRSSNLSPMLSVARDNFSLVKYLIDQVRLSHEQRVDELRTFYPMAKNDDWRLEVAGQRVQVIKKDPQKGGILQFGTEVVAASDGSLAALLGASPGASTATSIMLNLVEQCFPEKFASQAWQQRLHDLVPARAETLADNGDLLRDVRRRTHDTLKLVDTQPSPEPVT.

This sequence belongs to the MQO family. Requires FAD as cofactor.

It carries out the reaction (S)-malate + a quinone = a quinol + oxaloacetate. It participates in carbohydrate metabolism; tricarboxylic acid cycle; oxaloacetate from (S)-malate (quinone route): step 1/1. The chain is Probable malate:quinone oxidoreductase from Chromohalobacter salexigens (strain ATCC BAA-138 / DSM 3043 / CIP 106854 / NCIMB 13768 / 1H11).